The sequence spans 460 residues: Cytochrome P450 CYP71D312 (460 aa).

Cys398 contacts heme.

This sequence belongs to the cytochrome P450 family. The cofactor is heme.

Probable heme-thiolate monooxygenase. In Panax ginseng (Korean ginseng), this protein is Cytochrome P450 CYP71D312.